The primary structure comprises 347 residues: 4-hydroxy-tetrahydrodipicolinate reductase 1, chloroplastic (347 aa).

The N-terminal 51 residues, 1 to 51 (MATNGLMASSSVFLHRPRIAFASRTNQTVGKYGKGRVSFMGIGTRRLPVVL), are a transit peptide targeting the chloroplast. The residue at position 52 (serine 52) is an N-acetylserine. NAD(+)-binding positions include 79–84 (GCSGKM), 171–173 (GTT), and 194–197 (SPQM). The active-site Proton donor/acceptor is the histidine 230. The active-site Proton donor is lysine 234. (S)-2,3,4,5-tetrahydrodipicolinate is bound at residue 239-240 (GT).

It belongs to the DapB family.

The protein localises to the plastid. It is found in the chloroplast. The enzyme catalyses (S)-2,3,4,5-tetrahydrodipicolinate + NAD(+) + H2O = (2S,4S)-4-hydroxy-2,3,4,5-tetrahydrodipicolinate + NADH + H(+). The catalysed reaction is (S)-2,3,4,5-tetrahydrodipicolinate + NADP(+) + H2O = (2S,4S)-4-hydroxy-2,3,4,5-tetrahydrodipicolinate + NADPH + H(+). It functions in the pathway amino-acid biosynthesis; L-lysine biosynthesis via DAP pathway; (S)-tetrahydrodipicolinate from L-aspartate: step 4/4. In terms of biological role, catalyzes the conversion of 4-hydroxy-tetrahydrodipicolinate (HTPA) to tetrahydrodipicolinate. The polypeptide is 4-hydroxy-tetrahydrodipicolinate reductase 1, chloroplastic (DAPB1) (Arabidopsis thaliana (Mouse-ear cress)).